The primary structure comprises 352 residues: Uroporphyrinogen decarboxylase (352 aa).

Substrate-binding positions include 26–30 (RQAGR), D76, Y153, S208, and H323.

It belongs to the uroporphyrinogen decarboxylase family. Homodimer.

The protein localises to the cytoplasm. It catalyses the reaction uroporphyrinogen III + 4 H(+) = coproporphyrinogen III + 4 CO2. The protein operates within porphyrin-containing compound metabolism; protoporphyrin-IX biosynthesis; coproporphyrinogen-III from 5-aminolevulinate: step 4/4. Functionally, catalyzes the decarboxylation of four acetate groups of uroporphyrinogen-III to yield coproporphyrinogen-III. In Synechococcus sp. (strain CC9605), this protein is Uroporphyrinogen decarboxylase.